A 266-amino-acid chain; its full sequence is Phosphatidylserine decarboxylase proenzyme (266 aa).

Active-site charge relay system; for autoendoproteolytic cleavage activity residues include aspartate 74, histidine 135, and serine 237. Serine 237 acts as the Schiff-base intermediate with substrate; via pyruvic acid; for decarboxylase activity in catalysis. Serine 237 is modified (pyruvic acid (Ser); by autocatalysis).

The protein belongs to the phosphatidylserine decarboxylase family. PSD-B subfamily. Prokaryotic type I sub-subfamily. In terms of assembly, heterodimer of a large membrane-associated beta subunit and a small pyruvoyl-containing alpha subunit. Requires pyruvate as cofactor. In terms of processing, is synthesized initially as an inactive proenzyme. Formation of the active enzyme involves a self-maturation process in which the active site pyruvoyl group is generated from an internal serine residue via an autocatalytic post-translational modification. Two non-identical subunits are generated from the proenzyme in this reaction, and the pyruvate is formed at the N-terminus of the alpha chain, which is derived from the carboxyl end of the proenzyme. The autoendoproteolytic cleavage occurs by a canonical serine protease mechanism, in which the side chain hydroxyl group of the serine supplies its oxygen atom to form the C-terminus of the beta chain, while the remainder of the serine residue undergoes an oxidative deamination to produce ammonia and the pyruvoyl prosthetic group on the alpha chain. During this reaction, the Ser that is part of the protease active site of the proenzyme becomes the pyruvoyl prosthetic group, which constitutes an essential element of the active site of the mature decarboxylase.

The protein resides in the cell membrane. It catalyses the reaction a 1,2-diacyl-sn-glycero-3-phospho-L-serine + H(+) = a 1,2-diacyl-sn-glycero-3-phosphoethanolamine + CO2. The protein operates within phospholipid metabolism; phosphatidylethanolamine biosynthesis; phosphatidylethanolamine from CDP-diacylglycerol: step 2/2. Catalyzes the formation of phosphatidylethanolamine (PtdEtn) from phosphatidylserine (PtdSer). This chain is Phosphatidylserine decarboxylase proenzyme, found in Campylobacter jejuni subsp. jejuni serotype O:2 (strain ATCC 700819 / NCTC 11168).